Here is a 366-residue protein sequence, read N- to C-terminus: GDSL esterase/lipase At1g74460 (366 aa).

The signal sequence occupies residues 1–20 (MKFCAIFVLFIVLAINGYDC). S30 serves as the catalytic Nucleophile. N113 and N260 each carry an N-linked (GlcNAc...) asparagine glycan. Residues D320 and H323 contribute to the active site.

This sequence belongs to the 'GDSL' lipolytic enzyme family.

It is found in the secreted. In Arabidopsis thaliana (Mouse-ear cress), this protein is GDSL esterase/lipase At1g74460.